The following is a 415-amino-acid chain: Ornithine cyclodeaminase (415 aa).

NAD(+) contacts are provided by Asn241, Ala242, Asp320, Thr352, Leu354, His355, Asp373, Asp396, and Val397.

Belongs to the AgrE/ArgZ ornithine cyclodeaminase family. NAD(+) is required as a cofactor.

It carries out the reaction L-ornithine = L-proline + NH4(+). In terms of biological role, catalyzes the conversion of ornithine to proline, with the release of ammonia. The chain is Ornithine cyclodeaminase from Methanococcus maripaludis (strain DSM 14266 / JCM 13030 / NBRC 101832 / S2 / LL).